The following is a 221-amino-acid chain: Guanylate kinase (221 aa).

Residues 20 to 198 (GSLFMVVAPS…ALAELRTVVQ (179 aa)) form the Guanylate kinase-like domain. 27–34 (APSGAGKS) contacts ATP.

The protein belongs to the guanylate kinase family.

The protein resides in the cytoplasm. The enzyme catalyses GMP + ATP = GDP + ADP. Its function is as follows. Essential for recycling GMP and indirectly, cGMP. In Ralstonia nicotianae (strain ATCC BAA-1114 / GMI1000) (Ralstonia solanacearum), this protein is Guanylate kinase.